A 463-amino-acid chain; its full sequence is Pentatricopeptide repeat-containing protein At2g17670 (463 aa).

A disordered region spans residues 1 to 63; it reads MGKVPSSFRS…PSLRNPFKSP (63 aa). 9 PPR repeats span residues 121–157, 158–192, 193–223, 229–263, 264–298, 299–333, 334–368, 369–403, and 404–438; these read GRSTFLILLSHACRAPDSSISNVHRVLNLMVNNGLEP, DQVTTDIAVRSLCETGRVDEAKDLMKELTEKHSPP, DTYTYNFLLKHLCKCKDLHVVYEFVDEMRDD, DLVSFTILIDNVCNSKNLREAMYLVSKLGNAGFKP, DCFLYNTIMKGFCTLSKGSEAVGVYKKMKEEGVEP, DQITYNTLIFGLSKAGRVEEARMYLKTMVDAGYEP, DTATYTSLMNGMCRKGESLGALSLLEEMEARGCAP, NDCTYNTLLHGLCKARLMDKGMELYEMMKSSGVKL, and ESNGYATLVRSLVKSGKVAEAYEVFDYAVDSKSLS.

This sequence belongs to the PPR family. P subfamily.

The chain is Pentatricopeptide repeat-containing protein At2g17670 from Arabidopsis thaliana (Mouse-ear cress).